The chain runs to 240 residues: MGRAFQNRKESMAKTADAKTKVYSKYGREIYVCAKSGGVDPAGNLALRGLIDRAKKDQVPSHVIDKALDKASGVGGEDYELARYEGFGPGSCMVIVECLTDNPNRTFGDVRACFNKAKSKLGTPGSVSHMFDHCAILAFAGSDEEAVLEALMEADVDVTDIENEAGRITVFAPHTEYAKTKQALADAFGELDFEVDEIQFLAQTMTPVAGDDVAMFDKLLVTLNDLDDVQNIYHNAELQG.

The protein belongs to the TACO1 family.

The protein localises to the cytoplasm. The polypeptide is Probable transcriptional regulatory protein Csal_0810 (Chromohalobacter salexigens (strain ATCC BAA-138 / DSM 3043 / CIP 106854 / NCIMB 13768 / 1H11)).